The sequence spans 447 residues: Beclin-1 (447 aa).

Over residues 44–53 (PPLTAAPARP) the composition is skewed to low complexity. Positions 44–71 (PPLTAAPARPGDAQEESALSEEAFTEGR) are disordered. Positions 105-124 (TMENLSRRLKVTGDLFDIMS) match the BH3 motif. Residues 139–266 (DTLLDQLDTQ…QLDKLKKTNV (128 aa)) are a coiled coil. Positions 242 to 447 (DELKSVENQM…AWVSSQFYNK (206 aa)) are evolutionary conserved domain (ECD). Residues 422–447 (WTKALKFMLTNLKWGLAWVSSQFYNK) are required for membrane-association.

The protein belongs to the beclin family. As to quaternary structure, component of the PI3K (PI3KC3/PI3K-III/class III phosphatidylinositol 3-kinase) complex. In terms of processing, may be proteolytically processed by caspases; the C-terminal fragment(s) may induce apoptosis.

The protein resides in the cytoplasm. It is found in the golgi apparatus. Its subcellular location is the trans-Golgi network membrane. The protein localises to the endosome membrane. It localises to the endoplasmic reticulum membrane. The protein resides in the mitochondrion membrane. It is found in the cytoplasmic vesicle. Its subcellular location is the autophagosome. Its function is as follows. Plays a central role in autophagy. Acts as core subunit of different PI3K complex forms that mediate formation of phosphatidylinositol 3-phosphate and are believed to play a role in multiple membrane trafficking pathways such as initiation of autophagosomes, maturation of autophagosomes and endocytosis. Involved in regulation of degradative endocytic trafficking and required for the abscission step in cytokinesis, probably in the context of PI3KC3-C2. The chain is Beclin-1 (BECN1) from Gallus gallus (Chicken).